The following is a 428-amino-acid chain: Glutamate-1-semialdehyde 2,1-aminomutase (428 aa).

Residue Lys-265 is modified to N6-(pyridoxal phosphate)lysine.

It belongs to the class-III pyridoxal-phosphate-dependent aminotransferase family. HemL subfamily. As to quaternary structure, homodimer. Pyridoxal 5'-phosphate serves as cofactor.

It is found in the cytoplasm. The catalysed reaction is (S)-4-amino-5-oxopentanoate = 5-aminolevulinate. It functions in the pathway porphyrin-containing compound metabolism; protoporphyrin-IX biosynthesis; 5-aminolevulinate from L-glutamyl-tRNA(Glu): step 2/2. This chain is Glutamate-1-semialdehyde 2,1-aminomutase, found in Ruthia magnifica subsp. Calyptogena magnifica.